Here is a 318-residue protein sequence, read N- to C-terminus: Protoheme IX farnesyltransferase (318 aa).

Helical transmembrane passes span 29–49, 51–71, 102–122, 123–143, 151–171, 179–199, 219–239, 241–261, and 280–300; these read IIPL…QGQV, PVLL…AQTI, LIFA…FANL, LAAS…THWL, IVIG…AVTG, LIFA…ALMI, ATVK…LLLV, PLHA…AVFI, and LFLY…VDSL.

This sequence belongs to the UbiA prenyltransferase family. Protoheme IX farnesyltransferase subfamily.

It is found in the cell inner membrane. The catalysed reaction is heme b + (2E,6E)-farnesyl diphosphate + H2O = Fe(II)-heme o + diphosphate. Its pathway is porphyrin-containing compound metabolism; heme O biosynthesis; heme O from protoheme: step 1/1. In terms of biological role, converts heme B (protoheme IX) to heme O by substitution of the vinyl group on carbon 2 of heme B porphyrin ring with a hydroxyethyl farnesyl side group. The sequence is that of Protoheme IX farnesyltransferase from Nostoc sp. (strain PCC 7120 / SAG 25.82 / UTEX 2576).